The sequence spans 156 residues: Small ribosomal subunit protein uS7 (156 aa).

It belongs to the universal ribosomal protein uS7 family. As to quaternary structure, part of the 30S ribosomal subunit. Contacts proteins S9 and S11.

Functionally, one of the primary rRNA binding proteins, it binds directly to 16S rRNA where it nucleates assembly of the head domain of the 30S subunit. Is located at the subunit interface close to the decoding center, probably blocks exit of the E-site tRNA. The sequence is that of Small ribosomal subunit protein uS7 from Nitratidesulfovibrio vulgaris (strain ATCC 29579 / DSM 644 / CCUG 34227 / NCIMB 8303 / VKM B-1760 / Hildenborough) (Desulfovibrio vulgaris).